The following is a 55-amino-acid chain: Rubredoxin-2 (55 aa).

In terms of domain architecture, Rubredoxin-like spans 1–54 (MRKWQCVVCGFIYDEALGLPEEGIPAGTRWEDIPADWVCPDCGVGKIDFEMIEI). The Fe cation site is built by cysteine 6, cysteine 9, cysteine 39, and cysteine 42.

It belongs to the rubredoxin family. The cofactor is Fe(3+).

It localises to the cytoplasm. It participates in hydrocarbon metabolism; alkane degradation. Functionally, involved in the hydrocarbon hydroxylating system, which transfers electrons from NADH to rubredoxin reductase and then through rubredoxin to alkane 1 monooxygenase. The protein is Rubredoxin-2 (rubA2) of Pseudomonas aeruginosa (strain ATCC 15692 / DSM 22644 / CIP 104116 / JCM 14847 / LMG 12228 / 1C / PRS 101 / PAO1).